The chain runs to 383 residues: Fatty acid hydroxylase ahd1 (383 aa).

The next 4 helical transmembrane spans lie at 84–104 (VMGL…NKSW), 123–143 (TVHT…LFAL), 172–192 (LIPV…IIYY), and 214–236 (VAQW…RALH). The region spanning 217-341 (WLVCLLMEDI…VGLLDAIFKT (125 aa)) is the Fatty acid hydroxylase domain. An N-linked (GlcNAc...) asparagine glycan is attached at Asn342.

This sequence belongs to the sterol desaturase family.

It localises to the membrane. The protein operates within secondary metabolite biosynthesis. Its function is as follows. Fatty acid hydroxylase; part of the gene cluster that mediates the biosynthesis of the glycolipid biosurfactant ustilagic acid (UA). UA is a secreted cellobiose glycolipid that is toxic for many microorganisms and confers biocontrol activity to U.maydis. UA consists of 15,16-dihydroxypalmitic or 2,15,16-trihydroxypalmitic acid, which is O-glycosidically linked to cellobiose at its terminal hydroxyl group. In addition, the cellobiose moiety is acetylated and acylated with a short-chain hydroxy fatty acid. UA biosynthesis starts with omega-hydroxylation of palmitic acid catalyzed by the cytochrome P450 monooxygenase cyp1. Terminal hydroxylation of palmitic acid precedes subterminal hydroxylation catalyzed by the cytochrome P450 monooxygenase cyp2. Sequential glucosylation of the hydroxy fatty acid is probably catalyzed by the glycosyltransferase ugt1. The cellobiose lipid is further decorated by acetylation of the proximal glucose residue and by acylation with a short-chain beta-hydroxy fatty acid at the distal glucose residue. The acyltransferase uat1 may be a good candidate for catalyzing either acetylation or acylation of the cellobiose lipid. The fatty acid synthase fas2 may be involved in synthesis of the carbon backbone of the short-chain beta-hydroxy fatty acid esterified to the cellobiose disaccharide. The secreted UA consists of a mixture of both alpha-hydroxylated and non-hydroxylated glycolipids; therefore, alpha-hydroxylation of the long-chain fatty, catalyzed by the fatty acid hydroxylase ahd1, occurs late in UA biosynthesis and may be the last step before secretion. This chain is Fatty acid hydroxylase ahd1, found in Mycosarcoma maydis (Corn smut fungus).